A 517-amino-acid polypeptide reads, in one-letter code: Lysophosphatidylcholine acyltransferase 2B (517 aa).

Residue Asn-29 is glycosylated (N-linked (GlcNAc...) asparagine). The next 3 membrane-spanning stretches (helical) occupy residues 70–90, 103–123, and 137–157; these read IVFL…NLPI, LIKP…GFLI, and IFVV…VAGL. An HXXXXD motif motif is present at residues 143 to 148; sequence HSTFFD. EF-hand domains are found at residues 388-423 and 425-460; these read PISE…LCNP and NTEK…AFGV. Ca(2+)-binding residues include Asp-401, Asn-403, Asp-405, Thr-407, Glu-412, Asp-438, Asp-440, Asp-442, Tyr-444, and Glu-449.

Belongs to the 1-acyl-sn-glycerol-3-phosphate acyltransferase family.

The protein localises to the membrane. Its pathway is lipid metabolism; phospholipid metabolism. In terms of biological role, probable acetyltransferase. This chain is Lysophosphatidylcholine acyltransferase 2B (Lpcat2b), found in Rattus norvegicus (Rat).